The primary structure comprises 250 residues: NAD(P)H-quinone oxidoreductase subunit S, chloroplastic (250 aa).

Residues 1 to 48 (MATSSITIPTIRTPIHRSKFLGQTHQFSTVNRSVFPPPKQQSKLYQVK) constitute a chloroplast transit peptide. Lysine 52 participates in a covalent cross-link: Glycyl lysine isopeptide (Lys-Gly) (interchain with G-Cter in ubiquitin). 2 stretches are compositionally biased toward basic and acidic residues: residues 76–94 (QRNIEDEQETSKAENNETE) and 106–115 (VPEDGFEKEM). 2 disordered regions span residues 76–163 (QRNI…KPKA) and 222–250 (REKGPPGKNPKSCILEPLIEQMQKEEAAP). The segment covering 136-146 (NPPPPPPPPPA) has biased composition (pro residues).

Part of the chloroplast NDH complex, composed of a mixture of chloroplast and nucleus encoded subunits. Component of the electron donor-binding subcomplex, at least composed of NDHS, NDHT and NDHU. Interacts with the NDH subcomplex A via the protein NDHT and NDHU. Post-translationally, arg-193 is the critical site for the high affinity binding of NDH to ferredoxin.

Its subcellular location is the plastid. The protein resides in the chloroplast thylakoid membrane. The enzyme catalyses a plastoquinone + NADH + (n+1) H(+)(in) = a plastoquinol + NAD(+) + n H(+)(out). It carries out the reaction a plastoquinone + NADPH + (n+1) H(+)(in) = a plastoquinol + NADP(+) + n H(+)(out). In terms of biological role, NDH shuttles electrons from NAD(P)H:plastoquinone, via FMN and iron-sulfur (Fe-S) centers, to quinones in the photosynthetic chain and possibly in a chloroplast respiratory chain. The immediate electron acceptor for the enzyme in this species is believed to be plastoquinone. Couples the redox reaction to proton translocation, and thus conserves the redox energy in a proton gradient. Required for the efficient operation of ferredoxin-dependent plastoquinone reduction. Forms the electron donor-binding subcomplex in association with the NDHT and NDHU subunits. The protein is NAD(P)H-quinone oxidoreductase subunit S, chloroplastic of Arabidopsis thaliana (Mouse-ear cress).